An 86-amino-acid chain; its full sequence is Large ribosomal subunit protein bL28 (86 aa).

Belongs to the bacterial ribosomal protein bL28 family.

This is Large ribosomal subunit protein bL28 from Bacteroides thetaiotaomicron (strain ATCC 29148 / DSM 2079 / JCM 5827 / CCUG 10774 / NCTC 10582 / VPI-5482 / E50).